Consider the following 238-residue polypeptide: Large ribosomal subunit protein uL5c (238 aa).

It belongs to the universal ribosomal protein uL5 family. In terms of assembly, part of the 50S ribosomal subunit; contacts the 5S rRNA.

The protein localises to the plastid. It is found in the chloroplast. In terms of biological role, binds 5S rRNA, forms part of the central protuberance of the 50S subunit. This chain is Large ribosomal subunit protein uL5c (rpl5), found in Trieres chinensis (Marine centric diatom).